The chain runs to 778 residues: Tubulin polyglutamylase ttll6 (778 aa).

The tract at residues 1-43 (MGTPAERSVSEVCRCEPDPGLEGEGWGSDTHAEPSNTPIPLPV) is disordered. Residues 51-393 (KKKLWINLTN…LGACDRRKIT (343 aa)) enclose the TTL domain. Residues Lys-168, 174 to 175 (QG), 196 to 199 (QVYM), and 209 to 211 (KFD) contribute to the ATP site. Residue Gln-174 participates in a protein binding. Residue Arg-235 coordinates L-glutamate. ATP is bound at residue 257-258 (TN). 2 residues coordinate L-glutamate: Tyr-259 and Lys-277. Mg(2+)-binding residues include Asp-340, Glu-353, and Asn-355. His-356 contacts a protein. Residues 365–445 (RLDREVKDSL…MGGFRRIFPR (81 aa)) form a c-MTBD region region. Lys-371 lines the L-glutamate pocket. 4 stretches are compositionally biased toward basic and acidic residues: residues 402–418 (ERLQQNRSREARNEEPR), 485–510 (KQEQKERDKKGSRKQDLQGESAGEKV), 533–542 (SVREETPVSL), and 760–778 (LSHDLRKAPRRVLPHEHSL). Disordered regions lie at residues 402-422 (ERLQQNRSREARNEEPRQSQA), 485-542 (KQEQ…PVSL), and 758-778 (PHLSHDLRKAPRRVLPHEHSL).

This sequence belongs to the tubulin--tyrosine ligase family. It depends on Mg(2+) as a cofactor.

It localises to the cytoplasm. The protein localises to the cytoskeleton. It is found in the cilium axoneme. The protein resides in the cilium basal body. It catalyses the reaction L-glutamyl-[protein] + L-glutamate + ATP = gamma-L-glutamyl-L-glutamyl-[protein] + ADP + phosphate + H(+). The catalysed reaction is (L-glutamyl)(n)-gamma-L-glutamyl-L-glutamyl-[protein] + L-glutamate + ATP = (L-glutamyl)(n+1)-gamma-L-glutamyl-L-glutamyl-[protein] + ADP + phosphate + H(+). Functionally, polyglutamylase which modifies both tubulin and non-tubulin proteins, generating alpha-linked polyglutamate side chains on the gamma-carboxyl group of specific glutamate residues of target proteins. Preferentially mediates ATP-dependent long polyglutamate chain elongation over the initiation step of the polyglutamylation reaction. Preferentially modifies the alpha-tubulin tail over a beta-tail. Mediates microtubule polyglutamylation in cilia axoneme, which is important for ciliary structural formation and motility. Polyglutamylates olfactory cilia, necessary for the regulation of ciliary structure and beating. This Danio rerio (Zebrafish) protein is Tubulin polyglutamylase ttll6.